Here is a 347-residue protein sequence, read N- to C-terminus: Olfactory receptor 6J1 (347 aa).

Residues 1 to 24 (MGNWTAAVTEFVLLGFSLSREVEL) lie on the Extracellular side of the membrane. Asn-3 is a glycosylation site (N-linked (GlcNAc...) asparagine). Residues 25 to 45 (LLLVLLLPTFLLTLLGNLLII) form a helical membrane-spanning segment. Over 46–53 (STVLSCSR) the chain is Cytoplasmic. The chain crosses the membrane as a helical span at residues 54 to 74 (LHTPMYFFLCNLSILDILFTS). Over 75–98 (VISPKVLANLGSRDKTISFAGCIT) the chain is Extracellular. Cys-96 and Cys-188 are joined by a disulfide. A helical transmembrane segment spans residues 99–119 (QCYFYFFLGTVEFLLLTVMSY). At 120–138 (DRYATICCPLRYTTIMRPS) the chain is on the cytoplasmic side. A helical membrane pass occupies residues 139-159 (VCIGTVVFSWVGGFLSVLFPT). The Extracellular portion of the chain corresponds to 160–196 (ILISQLPFCGSNIINHFFCDSGPLLALACADTTAIEL). Residues 197–216 (MDFMLSSMVILCCIVLVAYS) traverse the membrane as a helical segment. Topologically, residues 217–236 (YTYIILTIVRIPSASGRKKA) are cytoplasmic. A helical transmembrane segment spans residues 237-257 (FNTCASHLTIVIISSGITVFI). The Extracellular segment spans residues 258–270 (YVTPSQKEYLEIN). The chain crosses the membrane as a helical span at residues 271 to 291 (KIPLVLSSVVTPFLNPFIYTL). Residues 292–347 (RNDTVQGVLRDVWVRVRGVFEKRMRAVLRSRLSSNKDHQGRACSSPPCVYSVKLQC) lie on the Cytoplasmic side of the membrane.

Belongs to the G-protein coupled receptor 1 family.

The protein localises to the cell membrane. Functionally, odorant receptor. In Homo sapiens (Human), this protein is Olfactory receptor 6J1 (OR6J1).